Here is a 152-residue protein sequence, read N- to C-terminus: UPF0178 protein YaiI (152 aa).

It belongs to the UPF0178 family.

This Shigella boydii serotype 18 (strain CDC 3083-94 / BS512) protein is UPF0178 protein YaiI.